The following is a 395-amino-acid chain: GPI-anchor transamidase (395 aa).

Positions 1-27 (MVDTCFLSRGLTTLAGLLLLPFGSLAA) are cleaved as a signal peptide. The Lumenal segment spans residues 28–368 (SQIEDQAEQF…PKLKDWHPPG (341 aa)). 4 residues coordinate Ca(2+): aspartate 79, isoleucine 82, glutamate 118, and aspartate 120. The active-site Proton donor is the histidine 164. The active-site Nucleophile; acyl-thioester intermediate is cysteine 206. Cysteine 206, serine 232, and serine 234 together coordinate a protein. The segment at 231–236 (DSLSHQ) is autoinhibitory loop. Residues cysteine 275 and cysteine 280 are joined by a disulfide bond. The helical transmembrane segment at 369 to 385 (GFILGLWALIIMVFFKT) threads the bilayer. The Cytoplasmic segment spans residues 386 to 395 (YGIKHMKFIF).

The protein belongs to the peptidase C13 family. As to quaternary structure, heteropentamer. Part of the GPI-anchor transamidase complex, consisting of PIGK, PIGT, PIGS, PIGU and GAA1. Interacts with GPAA1. Interacts with PIGT; this interaction, via a disulfide link, stabilizes the expression of GAA1 and PIGK and links them to PIGS. Post-translationally, the disulfide bond between PIGK/GPI8 and PIGT is important for normal enzyme activity.

The protein localises to the endoplasmic reticulum membrane. The protein operates within glycolipid biosynthesis; glycosylphosphatidylinositol-anchor biosynthesis. Its activity is regulated as follows. In the absence of proproteins substrates, exists in an inactive state with a disrupted catalytic site by an autoinhibitory loop. The binding of proprotein substrates, particularly the CSP region, to GPI-T triggers concerted conformational changes that alleviate the inhibition by the autoinhibitory loop. Meanwhile, proprotein residues near the omega- site induce the formation of a catalytic cleft for catalysis, following which the products are released and GPI-T reverts to the inactive state. In terms of biological role, catalytic subunit of the glycosylphosphatidylinositol-anchor (GPI-anchor) transamidase (GPI-T) complex that catalyzes the formation of the linkage between a proprotein and a GPI-anchor and participates in GPI anchored protein biosynthesis. Recognizes diverse proproteins at a C-terminal signal peptide (CSP) region that lacks consensus sequence and replaces it with a GPI-anchor via a transamidation reaction. Transamidation catalysis reaction follows a two-phase mechanism. In the acyl-enzyme phase, the carbonyl group of the proproteins's omega-site undergoes a nucleophilic attack forming an enzyme-substrate thioester bond. Followed by a general acid catalysis that allows CSP releasing, regenerating the carbonyl, and forming the acyl-enzyme intermediate. In the GPI-anchor attachment phase, the amino group of the GPI-anchor's ethanolamine phosphate, the one on third mannose (EtNP3), mediates a nucleophilic attack on the carbonyl of the acyl-enzyme intermediate, replacing the CSP, allowing GPI-anchor attachment to the omega-residue, therefore forming the product and freeing the enzyme. The sequence is that of GPI-anchor transamidase from Bos taurus (Bovine).